We begin with the raw amino-acid sequence, 312 residues long: DNA-directed RNA polymerase subunit alpha (312 aa).

The segment at 1–226 (MIEFEKPIIT…EHLNLFTDLT (226 aa)) is alpha N-terminal domain (alpha-NTD). Residues 242–312 (NDEKLLDRTI…DLGLGLKNDK (71 aa)) form an alpha C-terminal domain (alpha-CTD) region.

The protein belongs to the RNA polymerase alpha chain family. In terms of assembly, homodimer. The RNAP catalytic core consists of 2 alpha, 1 beta, 1 beta' and 1 omega subunit. When a sigma factor is associated with the core the holoenzyme is formed, which can initiate transcription.

The enzyme catalyses RNA(n) + a ribonucleoside 5'-triphosphate = RNA(n+1) + diphosphate. Functionally, DNA-dependent RNA polymerase catalyzes the transcription of DNA into RNA using the four ribonucleoside triphosphates as substrates. In Streptococcus thermophilus (strain CNRZ 1066), this protein is DNA-directed RNA polymerase subunit alpha.